The chain runs to 184 residues: MSCRSEHIWIQPITGSRKTSNLCWAIILFLGSLGFLLVGTSSYLGRNLISLFPSQQILFFPQGIVMSFYGIAGLFISSYLWCTISWNVGGGYDRFDRKEGMVCLFRWGFPGKNRRIFLRFLIKDIQSVRIEVKEGIYARRVLYMDIRGQGAIPLTRTDENVTPREIEQKAAELAYFLRVPIEVF.

Helical transmembrane passes span 22-42 (LCWA…GTSS) and 57-77 (ILFF…LFIS).

It belongs to the Ycf4 family.

The protein localises to the plastid. Its subcellular location is the chloroplast thylakoid membrane. Seems to be required for the assembly of the photosystem I complex. In Daucus carota (Wild carrot), this protein is Photosystem I assembly protein Ycf4.